The primary structure comprises 90 residues: Phosphoribosyl-ATP pyrophosphatase (90 aa).

It belongs to the PRA-PH family.

The protein localises to the cytoplasm. The catalysed reaction is 1-(5-phospho-beta-D-ribosyl)-ATP + H2O = 1-(5-phospho-beta-D-ribosyl)-5'-AMP + diphosphate + H(+). It functions in the pathway amino-acid biosynthesis; L-histidine biosynthesis; L-histidine from 5-phospho-alpha-D-ribose 1-diphosphate: step 2/9. The polypeptide is Phosphoribosyl-ATP pyrophosphatase (Streptomyces griseus subsp. griseus (strain JCM 4626 / CBS 651.72 / NBRC 13350 / KCC S-0626 / ISP 5235)).